Reading from the N-terminus, the 21-residue chain is Fibrinogen beta chain (21 aa).

Position 1 is a pyrrolidone carboxylic acid (Q1). A compositionally biased stretch (acidic residues) spans 1–11 (QHSTDYDEVED). The interval 1–21 (QHSTDYDEVEDDRAKLHLDAR) is disordered. O-linked (GalNAc...) threonine glycosylation is present at T4. At Y6 the chain carries Sulfotyrosine. Positions 12–21 (DRAKLHLDAR) are enriched in basic and acidic residues.

In terms of assembly, heterohexamer; disulfide linked. Contains 2 sets of 3 non-identical chains (alpha, beta and gamma). The 2 heterotrimers are in head to head conformation with the N-termini in a small central domain. In terms of processing, conversion of fibrinogen to fibrin is triggered by thrombin, which cleaves fibrinopeptides A and B from alpha and beta chains, and thus exposes the N-terminal polymerization sites responsible for the formation of the soft clot.

The protein localises to the secreted. Functionally, cleaved by the protease thrombin to yield monomers which, together with fibrinogen alpha (FGA) and fibrinogen gamma (FGG), polymerize to form an insoluble fibrin matrix. Fibrin has a major function in hemostasis as one of the primary components of blood clots. In addition, functions during the early stages of wound repair to stabilize the lesion and guide cell migration during re-epithelialization. Was originally thought to be essential for platelet aggregation, based on in vitro studies using anticoagulated blood. However subsequent studies have shown that it is not absolutely required for thrombus formation in vivo. Enhances expression of SELP in activated platelets. Maternal fibrinogen is essential for successful pregnancy. Fibrin deposition is also associated with infection, where it protects against IFNG-mediated hemorrhage. May also facilitate the antibacterial immune response via both innate and T-cell mediated pathways. This chain is Fibrinogen beta chain (FGB), found in Muntiacus muntjak (Barking deer).